The sequence spans 218 residues: Cytochrome c biogenesis ATP-binding export protein CcmA (218 aa).

Residues 2-217 (LEAKNLTCIR…KSCLSACCAV (216 aa)) enclose the ABC transporter domain. 34–41 (GPNGAGKT) contacts ATP.

Belongs to the ABC transporter superfamily. CcmA exporter (TC 3.A.1.107) family. The complex is composed of two ATP-binding proteins (CcmA) and two transmembrane proteins (CcmB).

The protein resides in the cell inner membrane. It carries out the reaction heme b(in) + ATP + H2O = heme b(out) + ADP + phosphate + H(+). Part of the ABC transporter complex CcmAB involved in the biogenesis of c-type cytochromes; once thought to export heme, this seems not to be the case, but its exact role is uncertain. Responsible for energy coupling to the transport system. The sequence is that of Cytochrome c biogenesis ATP-binding export protein CcmA from Yersinia pseudotuberculosis serotype I (strain IP32953).